Here is a 136-residue protein sequence, read N- to C-terminus: Urease subunit beta (136 aa).

Residues 113 to 136 (NDEYAGVFGDNGAENVNKKGGKRS) are disordered.

Belongs to the urease beta subunit family. As to quaternary structure, heterotrimer of UreA (gamma), UreB (beta) and UreC (alpha) subunits. Three heterotrimers associate to form the active enzyme.

The protein localises to the cytoplasm. It catalyses the reaction urea + 2 H2O + H(+) = hydrogencarbonate + 2 NH4(+). Its pathway is nitrogen metabolism; urea degradation; CO(2) and NH(3) from urea (urease route): step 1/1. The chain is Urease subunit beta from Staphylococcus aureus (strain USA300).